A 291-amino-acid polypeptide reads, in one-letter code: Porphobilinogen deaminase (291 aa).

Cys-237 bears the S-(dipyrrolylmethanemethyl)cysteine mark.

It belongs to the HMBS family. Monomer. It depends on dipyrromethane as a cofactor.

The enzyme catalyses 4 porphobilinogen + H2O = hydroxymethylbilane + 4 NH4(+). It participates in porphyrin-containing compound metabolism; protoporphyrin-IX biosynthesis; coproporphyrinogen-III from 5-aminolevulinate: step 2/4. Functionally, tetrapolymerization of the monopyrrole PBG into the hydroxymethylbilane pre-uroporphyrinogen in several discrete steps. This is Porphobilinogen deaminase from Clostridium perfringens (strain ATCC 13124 / DSM 756 / JCM 1290 / NCIMB 6125 / NCTC 8237 / Type A).